We begin with the raw amino-acid sequence, 601 residues long: Elongation factor 4 (601 aa).

Positions 7–189 constitute a tr-type G domain; it reads KHTRNFSIVA…AIVEKVPVPD (183 aa). GTP is bound by residues 19 to 24 and 136 to 139; these read DHGKST and NKID.

The protein belongs to the TRAFAC class translation factor GTPase superfamily. Classic translation factor GTPase family. LepA subfamily.

It is found in the cell membrane. The enzyme catalyses GTP + H2O = GDP + phosphate + H(+). Required for accurate and efficient protein synthesis under certain stress conditions. May act as a fidelity factor of the translation reaction, by catalyzing a one-codon backward translocation of tRNAs on improperly translocated ribosomes. Back-translocation proceeds from a post-translocation (POST) complex to a pre-translocation (PRE) complex, thus giving elongation factor G a second chance to translocate the tRNAs correctly. Binds to ribosomes in a GTP-dependent manner. The protein is Elongation factor 4 of Clostridium novyi (strain NT).